The sequence spans 110 residues: Phosphoribosyl-ATP pyrophosphatase (110 aa).

Belongs to the PRA-PH family.

Its subcellular location is the cytoplasm. The enzyme catalyses 1-(5-phospho-beta-D-ribosyl)-ATP + H2O = 1-(5-phospho-beta-D-ribosyl)-5'-AMP + diphosphate + H(+). The protein operates within amino-acid biosynthesis; L-histidine biosynthesis; L-histidine from 5-phospho-alpha-D-ribose 1-diphosphate: step 2/9. The sequence is that of Phosphoribosyl-ATP pyrophosphatase from Stutzerimonas stutzeri (strain A1501) (Pseudomonas stutzeri).